We begin with the raw amino-acid sequence, 124 residues long: Large ribosomal subunit protein bL12 (124 aa).

Belongs to the bacterial ribosomal protein bL12 family. In terms of assembly, homodimer. Part of the ribosomal stalk of the 50S ribosomal subunit. Forms a multimeric L10(L12)X complex, where L10 forms an elongated spine to which 2 to 4 L12 dimers bind in a sequential fashion. Binds GTP-bound translation factors.

In terms of biological role, forms part of the ribosomal stalk which helps the ribosome interact with GTP-bound translation factors. Is thus essential for accurate translation. In Cupriavidus necator (strain ATCC 17699 / DSM 428 / KCTC 22496 / NCIMB 10442 / H16 / Stanier 337) (Ralstonia eutropha), this protein is Large ribosomal subunit protein bL12.